The primary structure comprises 309 residues: SERTA domain-containing protein 2 (309 aa).

3 disordered regions span residues M1 to R30, E79 to G114, and P175 to L220. The segment covering R8–E18 has biased composition (basic and acidic residues). The 48-residue stretch at Y33–G80 folds into the SERTA domain. Low complexity-rich tracts occupy residues S89 to S99 and P175 to E189. The span at E204–F216 shows a compositional bias: basic and acidic residues. Positions T230–L306 are required for transactivation activity. A Nuclear export signal (NES) motif is present at residues L233–L238.

In terms of assembly, interacts with XPO1; which mediates nuclear export. Interacts with TFDP1; modulates transactivation activity of TFDP1/E2F complexes. Polyubiquitinated, which promotes proteasomal degradation. As to expression, expressed in white and brown adipose tissue.

The protein resides in the nucleus. Its subcellular location is the cytoplasm. Acts at E2F-responsive promoters as coregulator to integrate signals provided by PHD- and/or bromodomain-containing transcription factors. May act as coactivator as well as corepressor of E2F1-TFDP1 and E2F4-TFDP1 complexes on E2F consensus binding sites, which would activate or inhibit E2F-target genes expression. Modulates fat storage by down-regulating the expression of key genes involved in adipocyte lipolysis, thermogenesis and oxidative metabolism. The polypeptide is SERTA domain-containing protein 2 (Sertad2) (Mus musculus (Mouse)).